The following is a 585-amino-acid chain: Pyruvate kinase (585 aa).

A substrate-binding site is contributed by Arg-32. Asn-34, Ser-36, Asp-66, and Thr-67 together coordinate K(+). 34-37 (NFSH) provides a ligand contact to ATP. Residues Arg-73 and Lys-156 each contribute to the ATP site. Position 221 (Glu-221) interacts with Mg(2+). Substrate-binding residues include Gly-244, Asp-245, and Thr-277. Asp-245 lines the Mg(2+) pocket.

This sequence belongs to the pyruvate kinase family. The protein in the C-terminal section; belongs to the PEP-utilizing enzyme family. Mg(2+) serves as cofactor. It depends on K(+) as a cofactor.

The catalysed reaction is pyruvate + ATP = phosphoenolpyruvate + ADP + H(+). It functions in the pathway carbohydrate degradation; glycolysis; pyruvate from D-glyceraldehyde 3-phosphate: step 5/5. The protein is Pyruvate kinase (pyk) of Staphylococcus aureus (strain MRSA252).